The following is a 640-amino-acid chain: Biosynthetic arginine decarboxylase (640 aa).

Lysine 105 is subject to N6-(pyridoxal phosphate)lysine. A substrate-binding site is contributed by 290-300 (FDVGGGLAVDY).

It belongs to the Orn/Lys/Arg decarboxylase class-II family. SpeA subfamily. Mg(2+) serves as cofactor. It depends on pyridoxal 5'-phosphate as a cofactor.

It carries out the reaction L-arginine + H(+) = agmatine + CO2. Catalyzes the biosynthesis of agmatine from arginine. The chain is Biosynthetic arginine decarboxylase from Vibrio cholerae serotype O1 (strain ATCC 39315 / El Tor Inaba N16961).